We begin with the raw amino-acid sequence, 659 residues long: Pollen receptor-like kinase 6 (659 aa).

A signal peptide spans 1–26 (MAAAVLNPGFFLLILLLSFSISPSLQ). Residues 27 to 266 (YVSESEPLVR…SVPETSNKAA (240 aa)) lie on the Extracellular side of the membrane. The cysteines at positions 58 and 67 are disulfide-linked. LRR repeat units lie at residues 95–118 (LPNL…FFKL), 120–142 (GLKS…FFKD), 143–167 (MSKL…ITQL), 168–190 (PQLE…EFGS), and 192–214 (KNLK…SIAD). N128 carries an N-linked (GlcNAc...) asparagine glycan. N179 carries an N-linked (GlcNAc...) asparagine glycan. N-linked (GlcNAc...) asparagine glycosylation is present at N221. Residues 226–242 (EYLCGPVVDVGCENIEL) are LURE peptides binding. C229 and C237 form a disulfide bridge. The segment at 241 to 260 (ELNDPQEGQPPSKPSSSVPE) is disordered. A helical transmembrane segment spans residues 267-287 (INAIMVSISLLLLFFIIVGVI). Residues 288–659 (KRRNKKKNPD…AVRRIEQVKT (372 aa)) are Cytoplasmic-facing. Residues 312 to 354 (VRISESSSTTAKRSTDSSRKRGGHSDDGSTKKGVSNIGKGGNG) form a disordered region. Over residues 324–341 (RSTDSSRKRGGHSDDGST) the composition is skewed to basic and acidic residues. The Protein kinase domain maps to 384–659 (KAAAEVLGNG…AVRRIEQVKT (276 aa)). ATP-binding positions include 390-398 (LGNGSLGSA) and K412. S464 carries the post-translational modification Phosphoserine. T484 and T557 each carry phosphothreonine. S561 carries the phosphoserine modification.

Belongs to the protein kinase superfamily. Ser/Thr protein kinase family. As to quaternary structure, interacts with ROPGEF8, ROPGEF9, ROPGEF12, ROPGEF13, PRK3, LIP1 and LIP2. Binds to LURE peptides via its LRR repeats; interacts with LURE1.1, LURE1.2, LURE1.3 and LURE1.4. In terms of tissue distribution, expressed specifically in the pollen tube, predominantly at the tip.

It localises to the cell membrane. The protein resides in the cytoplasmic granule. Key receptor for sensing species-specific attractants in cooperation with other pollen receptor-like kinases. Essential for pollen tube reorientation toward attractant peptides. The polypeptide is Pollen receptor-like kinase 6 (Arabidopsis thaliana (Mouse-ear cress)).